The following is an 80-amino-acid chain: RNA-binding protein Hfq (80 aa).

One can recognise a Sm domain in the interval 10–70; the sequence is DLFLNTVRKQ…ISTIMPGQPM (61 aa).

Belongs to the Hfq family. Homohexamer.

Its function is as follows. RNA chaperone that binds small regulatory RNA (sRNAs) and mRNAs to facilitate mRNA translational regulation in response to envelope stress, environmental stress and changes in metabolite concentrations. Also binds with high specificity to tRNAs. The chain is RNA-binding protein Hfq from Rhizobium etli (strain CIAT 652).